Consider the following 621-residue polypeptide: MGLLSDPVRRRALARIVLRLNTPLCVLSYVAGIAWFLALAFPPLTQRTYMSENAMGSTMVEEQFVGGDRARSFARDFAAHRKKPGALPVAWLERSMRSVGLEVYTQSFSRKLPFPDETHERYMVSGTNVYGILRAPRSASTESLVLTVPCGPDATNSQAVGLLLALAAHFRGQIYWAKDIIFLVTDHDLLGTEAWLEAYHDINVTGIQSSPLQGRAGAIQAAVALELSSDVVTSLDVTVEGLNGQLPNLDLLNLFQTFCQKGGLLCTLQGKLQPQDWTSLEGPLQGLQTLLLMVLRQASGRPHGPHGLFLRYGVEALTLRGINSFRQYKYDLATVGKALEGMFRKLNHLLERLHQSFFFYLLPALSRFVSIGLYMPATGFLLLVLGLKALELWMQLHQAGVNPEEAGKAPSPGTPLLPTQGVGLASLTAPLLISQAMGLALYFLPVLGQHLATQHFPVAEAEAVVLTLLAIYVAGLALPHNTHRVVNSQVPDRGWMALKLVALIYLALQLGCIALLNFSLGFLLAATMVPAAALAKPHGPRTLYAALLVVTSPAVTLFGSLFLWRELLEVPLSLAEGWQLFLTALAQGVLEHYTYGALLFPILALGLYPCWLLFWNVLFWK.

Topologically, residues 1–19 (MGLLSDPVRRRALARIVLR) are cytoplasmic. Residues 20-41 (LNTPLCVLSYVAGIAWFLALAF) form a helical membrane-spanning segment. The Lumenal portion of the chain corresponds to 42 to 370 (PPLTQRTYMS…LLPALSRFVS (329 aa)). A 2-acyl-6-[6-phosphoethanolamine-alpha-D-mannosyl-(1-&gt;2)-6-phosphoethanolamine-alpha-D-mannosyl-(1-&gt;6)-2-phosphoethanolamine-alpha-D-mannosyl-(1-&gt;4)-alpha-D-glucosaminyl]-1-(1-radyl,2-acyl-sn-glycero-3-phospho)-1D-myo-inositol is bound by residues Tyr49 and Ser51. Asn203 carries an N-linked (GlcNAc...) asparagine glycan. Cys259 and Cys266 are joined by a disulfide. The a 2-acyl-6-[6-phosphoethanolamine-alpha-D-mannosyl-(1-&gt;2)-6-phosphoethanolamine-alpha-D-mannosyl-(1-&gt;6)-2-phosphoethanolamine-alpha-D-mannosyl-(1-&gt;4)-alpha-D-glucosaminyl]-1-(1-radyl,2-acyl-sn-glycero-3-phospho)-1D-myo-inositol site is built by His354, Gln355, and Ser356. Mg(2+) is bound at residue Gln355. Residues 371 to 393 (IGLYMPATGFLLLVLGLKALELW) form a helical membrane-spanning segment. The Cytoplasmic segment spans residues 394 to 425 (MQLHQAGVNPEEAGKAPSPGTPLLPTQGVGLA). Residues 426–450 (SLTAPLLISQAMGLALYFLPVLGQH) form a helical membrane-spanning segment. At 451 to 462 (LATQHFPVAEAE) the chain is on the lumenal side. A helical membrane pass occupies residues 463–483 (AVVLTLLAIYVAGLALPHNTH). Residues 484-495 (RVVNSQVPDRGW) are Cytoplasmic-facing. Helical transmembrane passes span 496–519 (MALK…LNFS) and 520–536 (LGFL…ALAK). The Cytoplasmic portion of the chain corresponds to 537 to 540 (PHGP). A helical transmembrane segment spans residues 541 to 563 (RTLYAALLVVTSPAVTLFGSLFL). The Lumenal portion of the chain corresponds to 564–597 (WRELLEVPLSLAEGWQLFLTALAQGVLEHYTYGA). A helical membrane pass occupies residues 598-619 (LLFPILALGLYPCWLLFWNVLF). The Cytoplasmic segment spans residues 620 to 621 (WK).

Heteropentamer. Part of the GPI-anchor transamidase complex, consisting of PIGK, PIGT, PIGS, PIGU and GAA1. Interacts with PIGK. Ubiquitously expressed in fetal and adult tissues. Expressed at higher levels in fetal tissues than adult tissues. In embryos abundant in the choroid plexus, skeletal muscle,.

The protein localises to the endoplasmic reticulum membrane. The protein operates within glycolipid biosynthesis; glycosylphosphatidylinositol-anchor biosynthesis. Its function is as follows. Component of the glycosylphosphatidylinositol-anchor (GPI-anchor) transamidase (GPI-T) complex that catalyzes the formation of the linkage between a proprotein and a GPI-anchor and participates in GPI anchored protein biosynthesis. Binds GPI-anchor. The chain is GPI-anchor transamidase component GPAA1 from Mus musculus (Mouse).